Consider the following 234-residue polypeptide: Thrombin-like enzyme contortrixobin (234 aa).

The Peptidase S1 domain occupies 1 to 225; the sequence is VVGGDECNIN…YNDWIQSIIA (225 aa). 6 cysteine pairs are disulfide-bonded: Cys7–Cys139, Cys26–Cys42, Cys74–Cys232, Cys118–Cys186, Cys150–Cys165, and Cys176–Cys201. Catalysis depends on charge relay system residues His41 and Asp86. Ser180 serves as the catalytic Charge relay system.

Monomer. In terms of processing, not glycosylated. Expressed by the venom gland.

It is found in the secreted. With respect to regulation, strongly inhibited by diisopropylfluorophosphate (DFP) and to a lesser extent by PMSF, benzamidine and 4,6-diamidino-2-phenylindole. Low inhibition by hirudin. Thrombin-like snake venom serine protease that cleaves beta chain of fibrinogen (FGB), releasing fibrinopeptide B. Has a coagulant activity activating blood coagulation factors V (F5) and XIII (F13A1). This Agkistrodon contortrix contortrix (Southern copperhead) protein is Thrombin-like enzyme contortrixobin.